Consider the following 317-residue polypeptide: Apolipoprotein E (317 aa).

Positions 1–18 (MKVLWAALLVTFLAGCQA) are cleaved as a signal peptide. Tandem repeats lie at residues 80-101 (TLMDETMKELKAYKSELEEQLS), 102-123 (PVAEETRARLSKELQAAQARLG), 124-145 (ADMEDVRSRLVQYRSEVQAMLG), 146-167 (QSTEELRARLASHLRKLRKRLL), 168-189 (RDADDLQKRLAVYQAGAREGAE), 190-211 (RGVSAIRERLGPLVEQGRVRAA), 212-233 (TVGSLASQPLQERAQALGERLR), and 234-255 (ARMEEMGSRTRDRLDEVKEQVA). Residues 80 to 255 (TLMDETMKEL…RLDEVKEQVA (176 aa)) are 8 X 22 AA approximate tandem repeats. Residue M143 is modified to Methionine sulfoxide. At S147 the chain carries Phosphoserine. An LDL and other lipoprotein receptors binding region spans residues 158 to 168 (HLRKLRKRLLR). 162–165 (LRKR) is a heparin binding site. The tract at residues 210–290 (AATVGSLASQ…SWFEPLVEDM (81 aa)) is lipid-binding and lipoprotein association. 229–236 (GERLRARM) contacts heparin. A homooligomerization region spans residues 266–317 (QQISLQAEAFQARLKSWFEPLVEDMQRQWAGLVEKVQAAVGASTAPVPIDNH). A specificity for association with VLDL region spans residues 278–290 (RLKSWFEPLVEDM).

The protein belongs to the apolipoprotein A1/A4/E family. As to quaternary structure, homotetramer. May interact with ABCA1; functionally associated with ABCA1 in the biogenesis of HDLs. May interact with APP/A4 amyloid-beta peptide; the interaction is extremely stable in vitro but its physiological significance is unclear. May interact with MAPT. May interact with MAP2. In the cerebrospinal fluid, interacts with secreted SORL1. Interacts with PMEL; this allows the loading of PMEL luminal fragment on ILVs to induce fibril nucleation. APOE exists as multiple glycosylated and sialylated glycoforms within cells and in plasma. The extent of glycosylation and sialylation are tissue and context specific. Post-translationally, glycated in plasma VLDL. In terms of processing, phosphorylated by FAM20C in the extracellular medium.

The protein localises to the secreted. It localises to the extracellular space. Its subcellular location is the extracellular matrix. The protein resides in the extracellular vesicle. It is found in the endosome. The protein localises to the multivesicular body. APOE is an apolipoprotein, a protein associating with lipid particles, that mainly functions in lipoprotein-mediated lipid transport between organs via the plasma and interstitial fluids. APOE is a core component of plasma lipoproteins and is involved in their production, conversion and clearance. Apolipoproteins are amphipathic molecules that interact both with lipids of the lipoprotein particle core and the aqueous environment of the plasma. As such, APOE associates with chylomicrons, chylomicron remnants, very low density lipoproteins (VLDL) and intermediate density lipoproteins (IDL) but shows a preferential binding to high-density lipoproteins (HDL). It also binds a wide range of cellular receptors including the LDL receptor/LDLR, the LDL receptor-related proteins LRP1, LRP2 and LRP8 and the very low-density lipoprotein receptor/VLDLR that mediate the cellular uptake of the APOE-containing lipoprotein particles. Finally, APOE also has a heparin-binding activity and binds heparan-sulfate proteoglycans on the surface of cells, a property that supports the capture and the receptor-mediated uptake of APOE-containing lipoproteins by cells. A main function of APOE is to mediate lipoprotein clearance through the uptake of chylomicrons, VLDLs, and HDLs by hepatocytes. APOE is also involved in the biosynthesis by the liver of VLDLs as well as their uptake by peripheral tissues ensuring the delivery of triglycerides and energy storage in muscle, heart and adipose tissues. By participating in the lipoprotein-mediated distribution of lipids among tissues, APOE plays a critical role in plasma and tissues lipid homeostasis. APOE is also involved in two steps of reverse cholesterol transport, the HDLs-mediated transport of cholesterol from peripheral tissues to the liver, and thereby plays an important role in cholesterol homeostasis. First, it is functionally associated with ABCA1 in the biogenesis of HDLs in tissues. Second, it is enriched in circulating HDLs and mediates their uptake by hepatocytes. APOE also plays an important role in lipid transport in the central nervous system, regulating neuron survival and sprouting. The sequence is that of Apolipoprotein E (APOE) from Macaca fascicularis (Crab-eating macaque).